The sequence spans 261 residues: Acetylglutamate kinase (261 aa).

Residues 46-47, Arg-68, and Asn-160 each bind substrate; that span reads GG.

Belongs to the acetylglutamate kinase family. ArgB subfamily.

It is found in the cytoplasm. The catalysed reaction is N-acetyl-L-glutamate + ATP = N-acetyl-L-glutamyl 5-phosphate + ADP. The protein operates within amino-acid biosynthesis; L-arginine biosynthesis; N(2)-acetyl-L-ornithine from L-glutamate: step 2/4. Its function is as follows. Catalyzes the ATP-dependent phosphorylation of N-acetyl-L-glutamate. The protein is Acetylglutamate kinase of Shewanella loihica (strain ATCC BAA-1088 / PV-4).